The chain runs to 172 residues: Adenine phosphoribosyltransferase (172 aa).

It belongs to the purine/pyrimidine phosphoribosyltransferase family. As to quaternary structure, homodimer.

It localises to the cytoplasm. It catalyses the reaction AMP + diphosphate = 5-phospho-alpha-D-ribose 1-diphosphate + adenine. The protein operates within purine metabolism; AMP biosynthesis via salvage pathway; AMP from adenine: step 1/1. In terms of biological role, catalyzes a salvage reaction resulting in the formation of AMP, that is energically less costly than de novo synthesis. The protein is Adenine phosphoribosyltransferase of Malacoplasma penetrans (strain HF-2) (Mycoplasma penetrans).